The following is a 287-amino-acid chain: MIKIGAHMPISKGFDRVPQDTVNIGGNSFQIFPHNARSWSAKLPSDEAATKFKREMKKHGIDWENAFCHSGYLINLASPKDDIWQKSVELLKKEVEICRKLGIRYLNIHPGSHLGTGEEEGIDRIVRGLNEVLNNTEGVVILLENVSQKGGNIGYKLEQLKKIRDLVDQRDRVAITYDTCHGFDSGYDITKKEGVEALLNEIESLFGLERLKMIHLNDSKYPLGAAKDRHERIGSGFIGEEGFAVFFSFKEIQEVPWILETPGGNEEHAEDIKKVFEIIEKFGIEVD.

Zn(2+) is bound by residues His69, His109, Glu144, Asp178, His181, His215, Asp228, His230, and Glu260.

The protein belongs to the AP endonuclease 2 family. The cofactor is Zn(2+).

It carries out the reaction Endonucleolytic cleavage to 5'-phosphooligonucleotide end-products.. Endonuclease IV plays a role in DNA repair. It cleaves phosphodiester bonds at apurinic or apyrimidinic (AP) sites, generating a 3'-hydroxyl group and a 5'-terminal sugar phosphate. This Thermotoga maritima (strain ATCC 43589 / DSM 3109 / JCM 10099 / NBRC 100826 / MSB8) protein is Probable endonuclease 4.